The chain runs to 236 residues: Small ribosomal subunit protein uS2c (236 aa).

It belongs to the universal ribosomal protein uS2 family.

It is found in the plastid. It localises to the chloroplast. The protein is Small ribosomal subunit protein uS2c (rps2) of Nicotiana tabacum (Common tobacco).